The sequence spans 370 residues: Probable G-protein coupled receptor 85 (370 aa).

At 1 to 25 the chain is on the extracellular side; sequence MANYSHAADNILQNLSPLTAFLKLT. Asparagine 3 carries an N-linked (GlcNAc...) asparagine glycan. The helical transmembrane segment at 26–46 threads the bilayer; the sequence is SLGFIIGVSVVGNLLISILLA. Over 47-57 the chain is Cytoplasmic; sequence KDKTLHRAPYY. Residues 58–78 traverse the membrane as a helical segment; it reads FLLDLCCSDILRSAICFPFVF. Topologically, residues 79-96 are extracellular; it reads NSVKNGSTWTYGTLTCKV. Residue asparagine 83 is glycosylated (N-linked (GlcNAc...) asparagine). A disulfide bond links cysteine 94 and cysteine 172. The chain crosses the membrane as a helical span at residues 97-117; the sequence is IAFLGVLSCFHTAFMLFCISV. The Cytoplasmic portion of the chain corresponds to 118-137; sequence TRYLAIAHHRFYTKRLTFWT. The helical transmembrane segment at 138–158 threads the bilayer; it reads CLAVICMVWTLSVAMAFPPVL. Topologically, residues 159–188 are extracellular; the sequence is DVGTYSFIREEDQCTFQHRSFRANDSLGFM. The N-linked (GlcNAc...) asparagine glycan is linked to asparagine 182. Residues 189–209 form a helical membrane-spanning segment; that stretch reads LLLALILLATQLVYLKLIFFV. Residues 210–286 are Cytoplasmic-facing; sequence HDRRKMKPVQ…FKMEKRISRM (77 aa). A helical transmembrane segment spans residues 287–307; that stretch reads FYIMTFLFLTLWGPYLVACYW. At 308–313 the chain is on the extracellular side; it reads RVFARG. A helical transmembrane segment spans residues 314–334; sequence PVVPGGFLTAAVWMSFAQAGI. The Cytoplasmic portion of the chain corresponds to 335-370; the sequence is NPFVCIFSNRELRRCFSTTLLYCRKSRLPREPYCVI.

This sequence belongs to the G-protein coupled receptor 1 family. In terms of assembly, interacts with DLG4 and DLG3.

It is found in the cell membrane. It localises to the endoplasmic reticulum. Functionally, orphan receptor. The chain is Probable G-protein coupled receptor 85 (GPR85) from Pongo abelii (Sumatran orangutan).